We begin with the raw amino-acid sequence, 277 residues long: Tetrahydroxynaphthalene reductase PfmaG (277 aa).

I36, D82, and N109 together coordinate NADP(+). Catalysis depends on proton donor residues S158, S159, and Y173. The NADP(+) site is built by Y173, K177, I206, and T208. The active-site Lowers pKa of active site Tyr is K177.

This sequence belongs to the short-chain dehydrogenases/reductases (SDR) family.

It carries out the reaction scytalone + NADP(+) = naphthalene-1,3,6,8-tetrol + NADPH + H(+). The protein operates within pigment biosynthesis; melanin biosynthesis. Tetrahydroxynaphthalene reductase; part of the gene cluster that mediates the biosynthesis of dihydroxynaphthalene (DHN)-melanin, a bluish-green pigment forming a dark layer in the conidial wall that protects the conidia from UV radiations. The first step of the pathway is the production of the pentaketide 1,3,6,8-tetrahydroxynaphthalene (1,3,6,8-THN or T4HN) by the polyketide synthase PfmaE though condensation of acetyl-CoA with malonyl-CoA. T4HN is not stable and easily oxidizes into the stable form flaviolin. T4HN is also substrate of the hydroxynaphthalene reductase PfmaG to yield scytalone. The scytalone dehydratase PfmaJ then reduces scytalone to 1,3,8-THN. 1,3,8-THN is then substrate of the hydroxynaphthalene reductase PfmaI to yield vermelone. Vermelone is further converted by the multicopper oxidase PfmaD to 1,8-DHN. Finally the laccase PFICI_06862 transforms 1,8-DHN to DHN-melanin. The roles of the 5-oxoprolinase PfmaA and the proline iminopeptidase PfmaB within the cluster have not been elucidated yet. This Pestalotiopsis fici (strain W106-1 / CGMCC3.15140) protein is Tetrahydroxynaphthalene reductase PfmaG.